Here is a 96-residue protein sequence, read N- to C-terminus: Putative pterin-4-alpha-carbinolamine dehydratase (96 aa).

The protein belongs to the pterin-4-alpha-carbinolamine dehydratase family.

It carries out the reaction (4aS,6R)-4a-hydroxy-L-erythro-5,6,7,8-tetrahydrobiopterin = (6R)-L-erythro-6,7-dihydrobiopterin + H2O. The polypeptide is Putative pterin-4-alpha-carbinolamine dehydratase (Prochlorococcus marinus (strain SARG / CCMP1375 / SS120)).